The sequence spans 87 residues: Gibberellin-regulated protein 8 (87 aa).

An N-terminal signal peptide occupies residues 1–25; the sequence is MKLVVVQFFIISLLLTSSFSVLSSA.

The protein belongs to the GASA family. Six disulfide bonds may be present. In terms of tissue distribution, expressed in roots and developing seeds.

It is found in the secreted. Gibberellin-regulated protein that may function in hormonal controlled steps of development such as seed germination, flowering and seed maturation. The polypeptide is Gibberellin-regulated protein 8 (Arabidopsis thaliana (Mouse-ear cress)).